Reading from the N-terminus, the 743-residue chain is Polyribonucleotide nucleotidyltransferase (743 aa).

Mg(2+)-binding residues include Asp-494 and Asp-500. The region spanning 561 to 620 (PQHAEVFVNPDIIRLIIGPGGKNIKAITAATGASVDIEDSGRVSIFAPTAEALEKAREMV) is the KH domain. The S1 motif domain maps to 630–704 (GKNYNAKVRK…SRKAVLLEEQ (75 aa)). The segment at 702–743 (EEQGHPWNPEDTARPQRSDRGDRGDRRGDRGGRDRRDRGDRR) is disordered. Over residues 712–743 (DTARPQRSDRGDRGDRRGDRGGRDRRDRGDRR) the composition is skewed to basic and acidic residues.

The protein belongs to the polyribonucleotide nucleotidyltransferase family. It depends on Mg(2+) as a cofactor.

It is found in the cytoplasm. The catalysed reaction is RNA(n+1) + phosphate = RNA(n) + a ribonucleoside 5'-diphosphate. Its function is as follows. Involved in mRNA degradation. Catalyzes the phosphorolysis of single-stranded polyribonucleotides processively in the 3'- to 5'-direction. This chain is Polyribonucleotide nucleotidyltransferase, found in Desulfovibrio desulfuricans (strain ATCC 27774 / DSM 6949 / MB).